Consider the following 269-residue polypeptide: Intermembrane phospholipid transport system ATP-binding protein MlaF (269 aa).

One can recognise an ABC transporter domain in the interval 9–245 (VDMRDVSFTR…PDPRVRQFLD (237 aa)). 41–48 (GPSGIGKT) contacts ATP.

The protein belongs to the ABC transporter superfamily. MlaF family. As to quaternary structure, the complex is composed of two ATP-binding proteins (MlaF), two transmembrane proteins (MlaE), two cytoplasmic solute-binding proteins (MlaB) and six periplasmic solute-binding proteins (MlaD).

The protein resides in the cell inner membrane. Its function is as follows. Part of the ABC transporter complex MlaFEDB, which is involved in a phospholipid transport pathway that maintains lipid asymmetry in the outer membrane by retrograde trafficking of phospholipids from the outer membrane to the inner membrane. Responsible for energy coupling to the transport system. This chain is Intermembrane phospholipid transport system ATP-binding protein MlaF, found in Escherichia coli O157:H7.